Here is a 492-residue protein sequence, read N- to C-terminus: Argininosuccinate lyase (492 aa).

This sequence belongs to the lyase 1 family. Argininosuccinate lyase subfamily.

Its subcellular location is the cytoplasm. The catalysed reaction is 2-(N(omega)-L-arginino)succinate = fumarate + L-arginine. The protein operates within amino-acid biosynthesis; L-arginine biosynthesis; L-arginine from L-ornithine and carbamoyl phosphate: step 3/3. The sequence is that of Argininosuccinate lyase from Methanocorpusculum labreanum (strain ATCC 43576 / DSM 4855 / Z).